We begin with the raw amino-acid sequence, 162 residues long: Protein-export protein SecB (162 aa).

It belongs to the SecB family. In terms of assembly, homotetramer, a dimer of dimers. One homotetramer interacts with 1 SecA dimer.

The protein resides in the cytoplasm. In terms of biological role, one of the proteins required for the normal export of preproteins out of the cell cytoplasm. It is a molecular chaperone that binds to a subset of precursor proteins, maintaining them in a translocation-competent state. It also specifically binds to its receptor SecA. The protein is Protein-export protein SecB of Pseudomonas savastanoi pv. phaseolicola (strain 1448A / Race 6) (Pseudomonas syringae pv. phaseolicola (strain 1448A / Race 6)).